A 971-amino-acid chain; its full sequence is uncharacterized protein (971 aa).

Positions 1 to 24 are cleaved as a signal peptide; that stretch reads MQSNLLKVLGVLAIVATLVCFIFA. Residues 127–146 form a disordered region; sequence RTRPGKSNLDDSNQMIPIPR. The next 6 helical transmembrane spans lie at 611–631, 721–741, 753–773, 795–815, 832–852, and 865–885; these read IKAILILYVMTYGAMFLLGFA, LGLSGIIYFIITFIAVCIVII, AFMATCILIGIAPLFISFLLF, VVMMAGIIVLTQLFTIYLDFV, FIGTILPIALLNVPIFCINWF, and GVNMQNIVALVIIAYGMYGYV. Residues 933–944 show a composition bias toward basic residues; it reads TSRAKSRLKQRN. Positions 933 to 971 are disordered; that stretch reads TSRAKSRLKQRNRTLEHAEQNSKKYMKKIGENTNEGTLK. The segment covering 945–954 has biased composition (basic and acidic residues); sequence RTLEHAEQNS.

Belongs to the TrbL/VirB6 family.

It localises to the cell membrane. This is an uncharacterized protein from Rickettsia typhi (strain ATCC VR-144 / Wilmington).